A 467-amino-acid chain; its full sequence is MQRWVLHIDMDAFFASCEQLTRPTLRGRPVLVGGVSGRGVVAGASYEARKFGARSAMPMHQAKARVGFGAVVVTPRHIVYSAASRRVFQIVEKRAGIVERLSIDEGFMEPEALVGATPEEVKQWAEELRAEIKEVTGLPSSVGAGSGKQIAKIGSGEAKPDGVFVVPVDKQHDLLDPLPVGALWGVGPVTGSKLASMGVETIGDLAALTQKEVEISLGATIGISLWNLARGIDDRPVEPRAEAKQISQEHTYEKDLLTRQQVDAAIIRSAEGAHRRLLKDGRGARTVSVKLRMADFRIESRSYTLSYATDDYATLEATAFRLARYPGEVGPIRLVGVSFSGLEESRQDILFPELDQQIIVPPAPDTDYEVGVQSSSSSESTQVEAPQDVALSMWRATQDVYHPEYGHGWVQGAGHGVVSVRFETRSTTKGRTKSFSMDDPDLTPADPLDSLDWADWFAENGETGDDE.

Residues 5–187 (VLHIDMDAFF…LPVGALWGVG (183 aa)) form the UmuC domain. Residues aspartate 9 and aspartate 104 each contribute to the Mg(2+) site. Glutamate 105 is an active-site residue. Disordered stretches follow at residues 364–386 (PDTD…VEAP) and 428–449 (TKGR…DPLD).

The protein belongs to the DNA polymerase type-Y family. In terms of assembly, monomer. It depends on Mg(2+) as a cofactor.

It is found in the cytoplasm. The enzyme catalyses DNA(n) + a 2'-deoxyribonucleoside 5'-triphosphate = DNA(n+1) + diphosphate. In terms of biological role, poorly processive, error-prone DNA polymerase involved in untargeted mutagenesis. Copies undamaged DNA at stalled replication forks, which arise in vivo from mismatched or misaligned primer ends. These misaligned primers can be extended by PolIV. Exhibits no 3'-5' exonuclease (proofreading) activity. May be involved in translesional synthesis, in conjunction with the beta clamp from PolIII. This is DNA polymerase IV from Corynebacterium glutamicum (strain R).